The sequence spans 334 residues: Malate dehydrogenase 2 (334 aa).

19-25 (IGAGKVG) is a binding site for NAD(+). Residues Arg100 and Arg106 each coordinate substrate. Residues Asn113 and 136 to 138 (VSN) contribute to the NAD(+) site. The substrate site is built by Asn138 and Arg169. The active-site Proton acceptor is the His193.

This sequence belongs to the LDH/MDH superfamily.

It carries out the reaction (S)-malate + NAD(+) = oxaloacetate + NADH + H(+). Its function is as follows. Catalyzes the reversible oxidation of malate to oxaloacetate. The protein is Malate dehydrogenase 2 of Aquifex aeolicus (strain VF5).